The chain runs to 1073 residues: Guanylyl cyclase C (1073 aa).

Residues 1 to 23 (MKTLLLDLALWSLLFQPGWLSFS) form the signal peptide. The Extracellular portion of the chain corresponds to 24–430 (SQVSQNCHNG…PNDITGRGPQ (407 aa)). Residues Asn-32, Asn-75, Asn-79, Asn-195, Asn-284, Asn-307, Asn-345, and Asn-402 are each glycosylated (N-linked (GlcNAc...) asparagine). The helical transmembrane segment at 431 to 454 (ILMIAVFTLTGAVVLLLLVALLML) threads the bilayer. The Cytoplasmic segment spans residues 455-1073 (RKYRKDYELR…NTTDKESTYF (619 aa)). The 261-residue stretch at 489–749 (LKIDDDKRRD…KIETTLAKIF (261 aa)) folds into the Protein kinase domain. Positions 824–954 (TIYFSDIVGF…DTVNTASRME (131 aa)) constitute a Guanylate cyclase domain.

This sequence belongs to the adenylyl cyclase class-4/guanylyl cyclase family. Homotrimer. Interacts via its C-terminal region with NHERF4. Interacts with the lectin chaperone VIP36. In terms of processing, glycosylation at Asn-75 and/or Asn-79 is required for interaction with VIP36 while glycosylation at Asn-345 and Asn-402 modulates ligand-mediated GUCY2C activation.

It localises to the cell membrane. The protein resides in the endoplasmic reticulum membrane. It catalyses the reaction GTP = 3',5'-cyclic GMP + diphosphate. Guanylyl cyclase that catalyzes synthesis of cyclic GMP (cGMP) from GTP. Receptor for the E.coli heat-stable enterotoxin; E.coli enterotoxin markedly stimulates the accumulation of cGMP in mammalian cells expressing GUCY2C. Also activated by the endogenous peptides guanylin and uroguanylin. This is Guanylyl cyclase C from Homo sapiens (Human).